Here is a 98-residue protein sequence, read N- to C-terminus: 10 kDa chaperonin (98 aa).

The protein belongs to the GroES chaperonin family. Forms stable complexes with CPN60 in the presence of ATP.

The protein resides in the cytoplasm. Seems to function only as a co-chaperone, along with cpn60, and in certain cases is essential for the discharge of biologically active proteins from cpn60. The chain is 10 kDa chaperonin from Brassica napus (Rape).